We begin with the raw amino-acid sequence, 101 residues long: Integration host factor subunit beta (101 aa).

The tract at residues 57–101 is disordered; sequence PARAGRNPRTGAHVPVDQKSVPFFKTGKEMRERLNRDHPDPGAAD. The span at 82–101 shows a compositional bias: basic and acidic residues; the sequence is TGKEMRERLNRDHPDPGAAD.

Belongs to the bacterial histone-like protein family. As to quaternary structure, heterodimer of an alpha and a beta chain.

This protein is one of the two subunits of integration host factor, a specific DNA-binding protein that functions in genetic recombination as well as in transcriptional and translational control. The polypeptide is Integration host factor subunit beta (Bradyrhizobium diazoefficiens (strain JCM 10833 / BCRC 13528 / IAM 13628 / NBRC 14792 / USDA 110)).